We begin with the raw amino-acid sequence, 963 residues long: MDSPSAGYTFEYLIETLNGNSQKKFFNVPKLGGTKYDILPYSIRVLLEAAVRNCDGFLMKKEDVMNILDWKTKQSNVEVPFFPARVVLQDFTGIPAMVDFAAMREAVKTLGGDPKKVHPACPTDLTVDHSLQIDFSKCAIQNAPNPGGGDLQKAGKLSPLKVQSKKLPCRGQTTCRGSCDSGELSRNSGTFSSQIENTPVLCPFHLQPVPEPETVLKNQEVEFGRNRERLQFFKWSSGAFKNVAVIPPGTGMAHQVNLEYLSRVVFEETDLLFPDSVVGTDSHITMVNGLGILGWGVGGIETEAVMLGLPVTLTLPEVVGCELTGSSNAFVTSIDIVLGITKHLRQVGVAGKFVEFFGSGVSQLSIVDRTTIANMCPEYGAILSFFPVDNVTLRHLEHTGFDKTKLESMEKYLKAVKLFRNDENSSEPEYSQVIQINLNSIVASVSGPKRPQDRVAVTDMKSDFQACLNEKVGFKGFQVAAEKQSDTVSVRYDGSEYKLSHGSVVIAAVISCTNNCNPSVMLAAGLLAKKAVEIGLRVKPYIRTSLSPGSGMVTHYLSSSGVLPYLSKLGFDIVGYGCSTCVGNTAPLSEAVLNAVKQGDLVTCGVLSGNKHFEGRLCDCVRANYLASPPLVVAYAIAGTVNIDFQTEPLGTDSTGKEIYLHDIWPSREEVHQMEEEHVILSMFKTLKEKVEMGNKRWNSLEAPDSVLFPWDVKSTYIRCPSFFDKLTKEPAASQPIENAHVLLYLGDSVTTDHISPAGSIARSSAAAKYLTNRGLTPREFNSYGARRGNDAVMTRGTFANIKLFNKFIGKPAPKTIHFPSGQTLDVFEAAELYQKEGIPLIILAGKKYGSGNSRDWAAKGPYLLGVKAVLAESYEKIHKDHLIGIGIAPLEFLPGENADSLGLSGREVFSLSFPEELFPGITLNIKTSTGKEFSVIASFANDVEITLYKHGGLLNFVARKFL.

Positions 512, 578, and 581 each coordinate [4Fe-4S] cluster.

The protein belongs to the aconitase/IPM isomerase family. As to quaternary structure, interacts with RBCK1 only in iron-rich conditions. Interacts (when associated with the 4Fe-4S) with FBXL5. Interacts with CIAO1 and CIAO2A. Requires [4Fe-4S] cluster as cofactor. In terms of processing, ubiquitinated and degraded by the proteasome in presence of high level of iron and oxygen. Ubiquitinated by a SCF complex containing FBXL5. Upon iron and oxygen depletion FBXL5 is degraded, preventing ubiquitination and allowing its RNA-binding activity.

The protein localises to the cytoplasm. RNA-binding protein that binds to iron-responsive elements (IRES), which are stem-loop structures found in the 5'-UTR of ferritin, and delta aminolevulinic acid synthase mRNAs, and in the 3'-UTR of transferrin receptor mRNA. Binding to the IRE element in ferritin results in the repression of its mRNA translation. Binding of the protein to the transferrin receptor mRNA inhibits the degradation of this otherwise rapidly degraded mRNA. The polypeptide is Iron-responsive element-binding protein 2 (Ireb2) (Mus musculus (Mouse)).